The following is a 354-amino-acid chain: MRVADFTFELPDSLIARHPLAERRGSRLLTLDGPTGALAHRQFTDLLEHLRPGDLMVFNNTRVIPARLFGQKASGGKLEILVERVLDSHRVLAHVRSSKSPKPGSKILIDGGGEAEMLARHDTLFELGFAEEVLPLLDRVGHMPLPPYIDRPDEGADRERYQTVYAQRLGAVAAPTAGLHFDQPLLEAIAAKGVETAFVTLHVGAGTFQPVRVERIEDHHMHHEWLEVGQDVVDAVAACRARGGRVVAVGTTSVRSLESAARDGVLKPFSGDTDIFIYPGRPFHVVDALVTNFHLPESTLLMLVSAFAGYPETMAAYRAAVENGYRFFSYGDAMFITRNPAPTAPKDLAPEETV.

Belongs to the QueA family. In terms of assembly, monomer.

It localises to the cytoplasm. The catalysed reaction is 7-aminomethyl-7-carbaguanosine(34) in tRNA + S-adenosyl-L-methionine = epoxyqueuosine(34) in tRNA + adenine + L-methionine + 2 H(+). Its pathway is tRNA modification; tRNA-queuosine biosynthesis. In terms of biological role, transfers and isomerizes the ribose moiety from AdoMet to the 7-aminomethyl group of 7-deazaguanine (preQ1-tRNA) to give epoxyqueuosine (oQ-tRNA). In Pseudomonas fluorescens (strain ATCC BAA-477 / NRRL B-23932 / Pf-5), this protein is S-adenosylmethionine:tRNA ribosyltransferase-isomerase.